The following is a 730-amino-acid chain: Heterogeneous nuclear ribonucleoprotein M (730 aa).

A compositionally biased stretch (low complexity) spans 1 to 13 (MAAGVEAAAEVAA). The disordered stretch occupies residues 1-62 (MAAGVEAAAE…NIKRGGNRFE (62 aa)). Ala-2 is subject to N-acetylalanine. Residue Lys-17 forms a Glycyl lysine isopeptide (Lys-Gly) (interchain with G-Cter in SUMO2) linkage. Residue Ser-29 is modified to Phosphoserine. Residue Lys-37 forms a Glycyl lysine isopeptide (Lys-Gly) (interchain with G-Cter in SUMO2) linkage. A compositionally biased stretch (basic and acidic residues) spans 38–50 (GEGERPAQNEKRK). Glycyl lysine isopeptide (Lys-Gly) (interchain with G-Cter in SUMO2) cross-links involve residues Lys-69 and Lys-83. 2 RRM domains span residues 71–149 (YRAF…EDPD) and 204–281 (STVF…MDER). Ser-86 is subject to Phosphoserine. Glycyl lysine isopeptide (Lys-Gly) (interchain with G-Cter in SUMO2) cross-links involve residues Lys-88 and Lys-127. Position 134 is an N6-acetyllysine; alternate (Lys-134). Residue Lys-134 forms a Glycyl lysine isopeptide (Lys-Gly) (interchain with G-Cter in SUMO2); alternate linkage. Glycyl lysine isopeptide (Lys-Gly) (interchain with G-Cter in SUMO2) cross-links involve residues Lys-143 and Lys-145. Position 204 is a phosphoserine (Ser-204). A Glycyl lysine isopeptide (Lys-Gly) (interchain with G-Cter in SUMO2) cross-link involves residue Lys-221. Residue Lys-277 is modified to N6-acetyllysine; alternate. Residue Lys-277 forms a Glycyl lysine isopeptide (Lys-Gly) (interchain with G-Cter in SUMO2); alternate linkage. Glycyl lysine isopeptide (Lys-Gly) (interchain with G-Cter in SUMO2) cross-links involve residues Lys-285 and Lys-345. Ser-365 and Ser-377 each carry phosphoserine. Residues Lys-381 and Lys-388 each participate in a glycyl lysine isopeptide (Lys-Gly) (interchain with G-Cter in SUMO2) cross-link. Ser-397 is modified (phosphoserine). Repeat copies occupy residues 400-405 (GIERMG), 407-412 (GIDRLG), 415-420 (GMERMG), and 426-431 (GMDRVG). The interval 400–608 (GIERMGPGID…ALGAGIERMG (209 aa)) is 27 X 6 AA repeats of [GEVSTPAN]-[ILMV]-[DE]-[RH]-[MLVI]-[GAV]. Ser-432 is modified (phosphoserine). Repeat copies occupy residues 433 to 438 (EIERMG), 440 to 445 (VMDRMG), and 446 to 451 (SVERMG). Phosphoserine is present on Ser-452. 4 repeat units span residues 453–458 (GIERMG), 461–466 (GLDHMA), 468–473 (SIERMG), and 475–480 (TMERIG). At Ser-468 the chain carries Phosphoserine. Ser-481 is modified (phosphoserine). Repeat copies occupy residues 482–487 (GVERMG), 493–498 (GLERMA), 500–505 (PIDRVG), 507–512 (TIERMG), 514–519 (GVERMG), 521–526 (AIERMG), 528–533 (SMERMV), 540–545 (GLERMG), 547–552 (VMDRMA), 554–559 (GLERMG), 562–566 (NLERM), 567–572 (GLERMG), 575–579 (SLERM), 580–585 (GLERMG), 588–593 (SLERMG), and 603–608 (GIERMG). Arg-496 is subject to Omega-N-methylarginine. Ser-528 is subject to Phosphoserine. The residue at position 575 (Ser-575) is a Phosphoserine. Ser-588 is subject to Phosphoserine. A phosphoserine mark is found at Ser-618, Ser-633, and Ser-637. Residue Lys-651 forms a Glycyl lysine isopeptide (Lys-Gly) (interchain with G-Cter in SUMO2) linkage. The RRM 3 domain occupies 653 to 729 (CQIFVRNLPF…REIDVRIDRN (77 aa)). Thr-665 is subject to Phosphothreonine. A Glycyl lysine isopeptide (Lys-Gly) (interchain with G-Cter in SUMO2) cross-link involves residue Lys-667. Lys-672 is modified (N6-acetyllysine). Glycyl lysine isopeptide (Lys-Gly) (interchain with G-Cter in SUMO2) cross-links involve residues Lys-685 and Lys-692. An N6-acetyllysine; alternate modification is found at Lys-698. Residue Lys-698 forms a Glycyl lysine isopeptide (Lys-Gly) (interchain with G-Cter in SUMO2); alternate linkage. A Glycyl lysine isopeptide (Lys-Gly) (interchain with G-Cter in SUMO1); alternate cross-link involves residue Lys-698. Ser-701 carries the post-translational modification Phosphoserine. A Glycyl lysine isopeptide (Lys-Gly) (interchain with G-Cter in SUMO2) cross-link involves residue Lys-716.

As to quaternary structure, identified in the spliceosome C complex. Interacts with PPIA/CYPA. In terms of processing, sumoylated.

The protein localises to the nucleus. It is found in the nucleolus. In terms of biological role, pre-mRNA binding protein in vivo, binds avidly to poly(G) and poly(U) RNA homopolymers in vitro. Involved in splicing. Acts as a receptor for carcinoembryonic antigen in Kupffer cells, may initiate a series of signaling events leading to tyrosine phosphorylation of proteins and induction of IL-1 alpha, IL-6, IL-10 and tumor necrosis factor alpha cytokines. The polypeptide is Heterogeneous nuclear ribonucleoprotein M (HNRNPM) (Homo sapiens (Human)).